The primary structure comprises 479 residues: Inhibitory synaptic factor 2A (479 aa).

Ser177 carries the phosphoserine modification. Disordered regions lie at residues 226–247 and 315–338; these read GRAK…ALRR and SPEC…PSPT. Over residues 228-237 the composition is skewed to basic and acidic residues; that stretch reads AKQDRGRPNS. Residues 318-337 show a composition bias toward polar residues; that stretch reads CSEQPSQTHTPPGLGNQPSP. Residues 353 to 379 are a coiled coil; it reads TEVVDLKAQLQMMENLISSSQETIKVL. A compositionally biased stretch (polar residues) spans 449 to 461; that stretch reads SPYSQETYSSTPK. The disordered stretch occupies residues 449–472; it reads SPYSQETYSSTPKQKSKTESKKHG.

This sequence belongs to the INSYN2 family. As to quaternary structure, interacts with GPHN.

The protein localises to the postsynaptic density. In terms of biological role, component of the protein machinery at the inhibitory synapses, probably acting as a scaffold. Inhibitory synapses dampen neuronal activity through postsynaptic hyperpolarization. This synaptic inhibition is fundamental for the functioning of the central nervous system, shaping and orchestrating the flow of information through neuronal networks to generate a precise neural code. The protein is Inhibitory synaptic factor 2A of Homo sapiens (Human).